The chain runs to 276 residues: Probable endonuclease 4 (276 aa).

Zn(2+) contacts are provided by His70, His108, Glu143, Asp176, His179, His210, Asp223, His225, and Glu255.

This sequence belongs to the AP endonuclease 2 family. It depends on Zn(2+) as a cofactor.

The enzyme catalyses Endonucleolytic cleavage to 5'-phosphooligonucleotide end-products.. Its function is as follows. Endonuclease IV plays a role in DNA repair. It cleaves phosphodiester bonds at apurinic or apyrimidinic (AP) sites, generating a 3'-hydroxyl group and a 5'-terminal sugar phosphate. The chain is Probable endonuclease 4 from Mesomycoplasma hyopneumoniae (strain 7448) (Mycoplasma hyopneumoniae).